The chain runs to 285 residues: Xanthoxin dehydrogenase (285 aa).

S2 carries the post-translational modification N-acetylserine.

It belongs to the short-chain dehydrogenases/reductases (SDR) family. In terms of tissue distribution, predominantly in roots and stems, and at lower levels in leaves and seeds.

Its subcellular location is the cytoplasm. The enzyme catalyses 2-cis,4-trans-xanthoxin + NAD(+) = 2-cis-(+)-abscisic aldehyde + NADH + H(+). It catalyses the reaction 2-trans,4-trans-xanthoxin + NAD(+) = 2-trans-(+)-abscisic aldehyde + NADH + H(+). Functionally, involved in the biosynthesis of abscisic acid. Catalyzes the conversion of xanthoxin to abscisic aldehyde. This is Xanthoxin dehydrogenase from Arabidopsis thaliana (Mouse-ear cress).